We begin with the raw amino-acid sequence, 331 residues long: D-aspartate oxidase 2 (331 aa).

FAD contacts are provided by D35, K36, S43, and G307.

It belongs to the DAMOX/DASOX family. It depends on FAD as a cofactor.

It localises to the cytoplasm. The catalysed reaction is D-aspartate + O2 + H2O = oxaloacetate + H2O2 + NH4(+). The enzyme catalyses D-glutamate + O2 + H2O = H2O2 + 2-oxoglutarate + NH4(+). Functionally, selectively catalyzes the oxidative deamination of acidic amino acids. May play a role in the egg-laying events and early development of the worm, in addition to quality control of the germ cells. This chain is D-aspartate oxidase 2, found in Caenorhabditis briggsae.